The primary structure comprises 240 residues: uncharacterized protein (240 aa).

Disordered stretches follow at residues 125–148 and 177–240; these read RRLD…EDVD and DESN…RKSR. A compositionally biased stretch (acidic residues) spans 130-148; the sequence is SSEDGEEEEENDYIDEDVD. A compositionally biased stretch (basic and acidic residues) spans 192–203; it reads SPRKSHIDHDFV. The segment covering 204 to 217 has biased composition (acidic residues); sequence IPEDEMLSEEEEQE. A Phosphoserine modification is found at Ser-231.

This sequence belongs to the UTP5 family.

It localises to the cytoplasm. It is found in the nucleus. This is an uncharacterized protein from Schizosaccharomyces pombe (strain 972 / ATCC 24843) (Fission yeast).